The sequence spans 141 residues: ATP synthase epsilon chain (141 aa).

This sequence belongs to the ATPase epsilon chain family. F-type ATPases have 2 components, CF(1) - the catalytic core - and CF(0) - the membrane proton channel. CF(1) has five subunits: alpha(3), beta(3), gamma(1), delta(1), epsilon(1). CF(0) has three main subunits: a, b and c.

It localises to the cell inner membrane. Its function is as follows. Produces ATP from ADP in the presence of a proton gradient across the membrane. The protein is ATP synthase epsilon chain of Paraburkholderia phytofirmans (strain DSM 17436 / LMG 22146 / PsJN) (Burkholderia phytofirmans).